A 123-amino-acid polypeptide reads, in one-letter code: MPTIKQLIRNARQPIRNVTKSPALGGCPQRRGTCTRVYTITPKKPNSALRKVARVRLTSGFEITAYIPGIGHNSQEHSVVLVRGGRVKDLPGVRYHIVRGTLDAVGVKDRQQGRSKYGVKKPK.

Belongs to the universal ribosomal protein uS12 family. Part of the 30S ribosomal subunit.

The protein resides in the plastid. Its subcellular location is the chloroplast. With S4 and S5 plays an important role in translational accuracy. Located at the interface of the 30S and 50S subunits. The protein is Small ribosomal subunit protein uS12cz/uS12cy (rps12-A) of Gossypium hirsutum (Upland cotton).